We begin with the raw amino-acid sequence, 444 residues long: Argininosuccinate synthase (444 aa).

Residues 18 to 26 (AFSGGLDTS) and Ala-44 contribute to the ATP site. Tyr-100 contributes to the L-citrulline binding site. ATP-binding residues include Gly-130 and Thr-132. L-aspartate is bound by residues Thr-132, Asn-136, and Asp-137. Asn-136 contacts L-citrulline. ATP is bound at residue Asp-137. Positions 140 and 193 each coordinate L-citrulline. Asp-195 contacts ATP. L-citrulline-binding residues include Thr-202, Glu-204, and Glu-281.

This sequence belongs to the argininosuccinate synthase family. Type 2 subfamily. In terms of assembly, homotetramer.

The protein resides in the cytoplasm. The enzyme catalyses L-citrulline + L-aspartate + ATP = 2-(N(omega)-L-arginino)succinate + AMP + diphosphate + H(+). It functions in the pathway amino-acid biosynthesis; L-arginine biosynthesis; L-arginine from L-ornithine and carbamoyl phosphate: step 2/3. The protein is Argininosuccinate synthase of Haemophilus influenzae (strain PittGG).